Reading from the N-terminus, the 291-residue chain is 3-hydroxy-5-phosphonooxypentane-2,4-dione thiolase (291 aa).

Residue lysine 203 is the Schiff-base intermediate with substrate of the active site.

This sequence belongs to the DeoC/FbaB aldolase family. As to quaternary structure, homodecamer.

Its subcellular location is the cytoplasm. The enzyme catalyses dihydroxyacetone phosphate + acetyl-CoA = 3-hydroxy-2,4-dioxopentyl phosphate + CoA. Functionally, involved in the degradation of phospho-AI-2, thereby terminating induction of the lsr operon and closing the AI-2 signaling cycle. Catalyzes the transfer of an acetyl moiety from 3-hydroxy-5-phosphonooxypentane-2,4-dione to CoA to form glycerone phosphate and acetyl-CoA. This is 3-hydroxy-5-phosphonooxypentane-2,4-dione thiolase from Salmonella paratyphi A (strain ATCC 9150 / SARB42).